Here is an 85-residue protein sequence, read N- to C-terminus: Small ribosomal subunit protein bS20 (85 aa).

This sequence belongs to the bacterial ribosomal protein bS20 family.

Functionally, binds directly to 16S ribosomal RNA. This chain is Small ribosomal subunit protein bS20, found in Ruminiclostridium cellulolyticum (strain ATCC 35319 / DSM 5812 / JCM 6584 / H10) (Clostridium cellulolyticum).